The primary structure comprises 325 residues: Diadenosine 5',5'''-P1,P4-tetraphosphate phosphorylase 2 (325 aa).

Substrate is bound by residues Lys53, 92–93 (NK), Asn148, and 154–157 (GSSQ). His161 acts as the Nucleophile in catalysis. Substrate-binding positions include Gln163, 277–279 (NST), Met284, and Lys288.

This sequence belongs to the ATP adenylyltransferase family. As to quaternary structure, monomer. Requires a divalent metal cation as cofactor.

It localises to the cytoplasm. Its subcellular location is the nucleus. The enzyme catalyses ADP + ATP + H(+) = P(1),P(4)-bis(5'-adenosyl) tetraphosphate + phosphate. The catalysed reaction is sulfate + ADP + H(+) = adenosine 5'-phosphosulfate + phosphate. Functionally, ap4A phosphorylase catalyzes the phosphorolytic degradation of bis(5'-adenosyl) tetraphosphate (Ap4A) into ADP and ATP. Can also use other Np4N' nucleotides (where N and N' stand for A,C,G or U) as substrates, but prefers A-containing substrates. Cannot catalyze the reverse reaction. Additionally, this enzyme can also catalyze the phosphorolytic degradation of adenosine 5'-phosphosulfate (AMPS) into ADP and sulfate, the reversible exchange reaction between inorganic phosphate and the beta-phosphate of a nucleoside diphosphate (NDP), and the synthesis of Ap4A from AMPS plus ATP. The sequence is that of Diadenosine 5',5'''-P1,P4-tetraphosphate phosphorylase 2 from Saccharomyces cerevisiae (strain ATCC 204508 / S288c) (Baker's yeast).